Reading from the N-terminus, the 476-residue chain is Serine--tRNA ligase (476 aa).

280–282 (TAE) contributes to the L-serine binding site. Position 311 to 313 (311 to 313 (RAE)) interacts with ATP. An L-serine-binding site is contributed by glutamate 334. ATP is bound at residue 401-404 (EISS). L-serine is bound at residue serine 436.

The protein belongs to the class-II aminoacyl-tRNA synthetase family. Type-1 seryl-tRNA synthetase subfamily. In terms of assembly, homodimer. The tRNA molecule binds across the dimer.

Its subcellular location is the cytoplasm. It catalyses the reaction tRNA(Ser) + L-serine + ATP = L-seryl-tRNA(Ser) + AMP + diphosphate + H(+). The enzyme catalyses tRNA(Sec) + L-serine + ATP = L-seryl-tRNA(Sec) + AMP + diphosphate + H(+). Its pathway is aminoacyl-tRNA biosynthesis; selenocysteinyl-tRNA(Sec) biosynthesis; L-seryl-tRNA(Sec) from L-serine and tRNA(Sec): step 1/1. Its function is as follows. Catalyzes the attachment of serine to tRNA(Ser). Is also able to aminoacylate tRNA(Sec) with serine, to form the misacylated tRNA L-seryl-tRNA(Sec), which will be further converted into selenocysteinyl-tRNA(Sec). The sequence is that of Serine--tRNA ligase from Rhodopseudomonas palustris (strain HaA2).